Consider the following 392-residue polypeptide: HCLS1-binding protein 3 (392 aa).

Met-1 is subject to N-acetylmethionine. Ser-3, Ser-139, and Ser-194 each carry phosphoserine. The region spanning 19-142 (GLDLTVPQHQ…EFLGTRSPGA (124 aa)) is the PX domain. 3 disordered regions span residues 138–162 (RSPG…QTGN), 174–265 (DQVA…PLKL), and 319–364 (GAEP…KPQE). The segment covering 190 to 201 (DAEESLEEEEAL) has biased composition (acidic residues). Residues 208-220 (RSKKPKKHPKVAV) are compositionally biased toward basic residues. Ser-249 bears the Phosphoserine mark. The span at 325–335 (KPQLKPKPPVA) shows a compositional bias: pro residues. Lys-337 carries the N6-acetyllysine modification.

As to quaternary structure, binds HCLS1. Interacts with the SH3 domain of HCLS1 in vitro.

Functionally, may be a modulator of IL-2 signaling. This chain is HCLS1-binding protein 3 (HS1BP3), found in Homo sapiens (Human).